The chain runs to 226 residues: PKHD-type hydroxylase Daci_1172 (226 aa).

In terms of domain architecture, Fe2OG dioxygenase spans 78–178 (KVLPPRFNRY…RYASFFWTHS (101 aa)). Fe cation contacts are provided by His-96, Asp-98, and His-159. Arg-169 is a 2-oxoglutarate binding site.

Fe(2+) serves as cofactor. L-ascorbate is required as a cofactor.

In Delftia acidovorans (strain DSM 14801 / SPH-1), this protein is PKHD-type hydroxylase Daci_1172.